The chain runs to 142 residues: Immunoglobulin omega chain (142 aa).

The N-terminal stretch at 1–19 (MAWTSVLLMLLAHLTGCGP) is a signal peptide. Residues 20-41 (QPMVHQPPSASSSLGATIRLSC) form a framework-1 region. A disulfide bond links Cys41 and Cys115. The tract at residues 42-56 (TLSNDHNIGIYSIYW) is complementarity-determining-1. Residues 57–70 (YQQRPGHPPRFLLR) form a framework-2 region. The complementarity-determining-2 stretch occupies residues 71–81 (YFSHSDKHQGP). Positions 82-115 (DIPPRFSGSKDTARNLGYLSISELQPEDEAVYYC) are framework-3.

This sequence belongs to the immunoglobulin superfamily. Only expressed by pre-B-cells.

Associates with the Ig-mu chain to form a molecular complex that is expressed on the surface of pre-B-cells. This complex presumably regulates Ig gene rearrangements in the early steps of B-cell differentiation. The chain is Immunoglobulin omega chain from Mus musculus (Mouse).